We begin with the raw amino-acid sequence, 362 residues long: MTEALISAALNGTQPELLAGGWAAGNATTKCSLTKTGFQFYYLPTVYILVFITGFLGNSVAIWMFVFHMRPWSGISVYMFNLALADFLYVLTLPALIFYYFNKTDWIFGDVMCKLQRFIFHVNLYGSILFLTCISVHRYTGVVHPLKSLGRLKKKNAVYVSSLVWALVVAVIAPILFYSGTGVRRNKTITCYDTTADEYLRSYFVYSMCTTVFMFCIPFIVILGCYGLIVKALIYKDLDNSPLRRKSIYLVIIVLTVFAVSYLPFHVMKTLNLRARLDFQTPQMCAFNDKVYATYQVTRGLASLNSCVDPILYFLAGDTFRRRLSRATRKSSRRSEPNVQSKSEEMTLNILTEYKQNGDTSL.

Over M1–F40 the chain is Extracellular. Residues N11 and N26 are each glycosylated (N-linked (GlcNAc...) asparagine). Intrachain disulfides connect C31–C285 and C113–C191. ADP is bound at residue K35. Residues Y41–W63 form a helical membrane-spanning segment. Residues M64–S76 lie on the Cytoplasmic side of the membrane. Residues V77–F98 form a helical membrane-spanning segment. Residues Y99–K114 lie on the Extracellular side of the membrane. N-linked (GlcNAc...) asparagine glycosylation is present at N102. The helical transmembrane segment at L115–V136 threads the bilayer. At H137–K155 the chain is on the cytoplasmic side. Residues N156 to F177 traverse the membrane as a helical segment. At Y178 to Y203 the chain is on the extracellular side. N-linked (GlcNAc...) asparagine glycosylation is present at N186. Y192–T194 provides a ligand contact to ADP. The helical transmembrane segment at F204–Y226 threads the bilayer. Over G227–Y249 the chain is Cytoplasmic. The chain crosses the membrane as a helical span at residues L250–L273. ADP-binding positions include N272–R276, Y292–Y295, and R299. Residues R274 to Y292 lie on the Extracellular side of the membrane. The chain crosses the membrane as a helical span at residues A293–F314. Residues L315–L362 are Cytoplasmic-facing.

It belongs to the G-protein coupled receptor 1 family. Brain, spinal cord, gastrointestinal tract, spleen and leg muscle. Is not detected in the heart, liver, stomach, lung and kidney.

The protein localises to the cell membrane. Receptor for extracellular adenine nucleotides such as ADP. In platelets, binding to ADP leads to mobilization of intracellular calcium ions via activation of phospholipase C, a change in platelet shape, and ultimately platelet aggregation. The sequence is that of P2Y purinoceptor 1 (P2RY1) from Gallus gallus (Chicken).